Here is a 380-residue protein sequence, read N- to C-terminus: Cytochrome b (380 aa).

The next 4 helical transmembrane spans lie at 33–53 (FGSL…FLAM), 77–98 (WLIR…YLHI), 113–133 (WNVG…GYVL), and 178–198 (FFAF…IHLL). Heme b-binding residues include histidine 83 and histidine 97. Residues histidine 182 and histidine 196 each coordinate heme b. Histidine 201 is a binding site for a ubiquinone. Transmembrane regions (helical) follow at residues 226 to 246 (YKDL…ALFS), 288 to 308 (LGGV…PALH), 320 to 340 (ITQL…WIGG), and 347 to 367 (FIII…TLIP).

This sequence belongs to the cytochrome b family. In terms of assembly, the cytochrome bc1 complex contains 3 respiratory subunits (MT-CYB, CYC1 and UQCRFS1), 2 core proteins (UQCRC1 and UQCRC2) and probably 6 low-molecular weight proteins. It depends on heme b as a cofactor.

The protein localises to the mitochondrion inner membrane. Functionally, component of the ubiquinol-cytochrome c reductase complex (complex III or cytochrome b-c1 complex) that is part of the mitochondrial respiratory chain. The b-c1 complex mediates electron transfer from ubiquinol to cytochrome c. Contributes to the generation of a proton gradient across the mitochondrial membrane that is then used for ATP synthesis. The protein is Cytochrome b (mt-cyb) of Percopsis transmontana (Sand roller).